Reading from the N-terminus, the 409-residue chain is Putative integrase/recombinase y4rA (409 aa).

The region spanning 112–197 is the Core-binding (CB) domain; the sequence is SAVEQHVQAY…ALRSFLSYAR (86 aa). Residues 220-402 form the Tyr recombinase domain; it reads SIPRAIGRDD…DLDALRTLAL (183 aa). Catalysis depends on residues arginine 260, lysine 284, histidine 354, arginine 357, and histidine 380. Catalysis depends on tyrosine 389, which acts as the O-(3'-phospho-DNA)-tyrosine intermediate.

It belongs to the 'phage' integrase family.

The sequence is that of Putative integrase/recombinase y4rA from Sinorhizobium fredii (strain NBRC 101917 / NGR234).